The primary structure comprises 2381 residues: Protein Ycf2 (2381 aa).

Position 1655-1662 (1655-1662 (GPMETGRS)) interacts with ATP.

The protein belongs to the Ycf2 family.

The protein localises to the plastid. It is found in the chloroplast stroma. Its function is as follows. Probable ATPase of unknown function. Its presence in a non-photosynthetic plant (Epifagus virginiana) and experiments in tobacco indicate that it has an essential function which is probably not related to photosynthesis. This Angiopteris evecta (Mule's foot fern) protein is Protein Ycf2.